Reading from the N-terminus, the 211-residue chain is Metalloproteinase inhibitor 3 (211 aa).

Residues 1–23 form the signal peptide; sequence MTPWLGLVVLLGSWSLGDWGAEA. Cys24 lines the Zn(2+) pocket. Involved in metalloproteinase-binding stretches follow at residues 24 to 27 and 88 to 89; these read CTCS and ES. Cystine bridges form between Cys24-Cys91, Cys26-Cys118, Cys36-Cys143, Cys145-Cys192, Cys150-Cys155, and Cys163-Cys184. One can recognise an NTR domain in the interval 24 to 143; the sequence is CTCSPSHPQD…GLNYRYHLGC (120 aa). The segment at 105-188 is mediates interaction with EFEMP1; the sequence is TGRVYDGKMY…SKHYACIRQK (84 aa). An N-linked (GlcNAc...) asparagine glycan is attached at Asn207.

This sequence belongs to the protease inhibitor I35 (TIMP) family. In terms of assembly, interacts with EFEMP1. Interacts with KDR.

The protein localises to the secreted. Its subcellular location is the extracellular space. The protein resides in the extracellular matrix. Mediates a variety of processes including matrix regulation and turnover, inflammation, and angiogenesis, through reversible inhibition of zinc protease superfamily enzymes, primarily matrix metalloproteinases (MMPs). Regulates extracellular matrix (ECM) remodeling through inhibition of matrix metalloproteinases (MMP) including MMP-1, MMP-2, MMP-3, MMP-7, MMP-9, MMP-13, MMP-14 and MMP-15. Additionally, modulates the processing of amyloid precursor protein (APP) and apolipoprotein E receptor ApoER2 by inhibiting two alpha-secretases ADAM10 and ADAM17. Functions as a tumor suppressor and a potent inhibitor of angiogenesis. Exerts its anti-angiogenic effect by directly interacting with vascular endothelial growth factor (VEGF) receptor-2/KDR, preventing its binding to the VEGFA ligand. Selectively induces apoptosis in angiogenic endothelial cells through a caspase-independent cell death pathway. Mechanistically, inhibits matrix-induced focal adhesion kinase PTK2 tyrosine phosphorylation and association with paxillin/PXN and disrupts the incorporation of ITGB3, PTK2 and PXN into focal adhesion contacts on the matrix. This is Metalloproteinase inhibitor 3 (TIMP3) from Bos taurus (Bovine).